Here is an 81-residue protein sequence, read N- to C-terminus: MAKKKGGATTRSGKKKVCVFCKENIEYVDYKDYNMLRRFTSERGKIRARRVTGLCPQHQRETARAIKRAREMALLPYIAGR.

This sequence belongs to the bacterial ribosomal protein bS18 family. Part of the 30S ribosomal subunit. Forms a tight heterodimer with protein bS6.

Functionally, binds as a heterodimer with protein bS6 to the central domain of the 16S rRNA, where it helps stabilize the platform of the 30S subunit. The protein is Small ribosomal subunit protein bS18 of Rubrobacter xylanophilus (strain DSM 9941 / JCM 11954 / NBRC 16129 / PRD-1).